The primary structure comprises 140 residues: Protein archease (140 aa).

Positions 12, 139, and 140 each coordinate Ca(2+).

This sequence belongs to the archease family.

Activates the tRNA-splicing ligase complex by facilitating the enzymatic turnover of catalytic subunit RtcB. Acts by promoting the guanylylation of RtcB, a key intermediate step in tRNA ligation. Can also alter the NTP specificity of RtcB such that ATP, dGTP or ITP is used efficiently. May also act as a chaperone or modulator of proteins involved in DNA or RNA processing. This is Protein archease from Methanothermobacter thermautotrophicus (strain ATCC 29096 / DSM 1053 / JCM 10044 / NBRC 100330 / Delta H) (Methanobacterium thermoautotrophicum).